A 151-amino-acid polypeptide reads, in one-letter code: Large-conductance mechanosensitive channel (151 aa).

A run of 2 helical transmembrane segments spans residues 12–32 (GNIVDLAVAVVIGTAFTALVT) and 71–91 (VLLSATINFILVAGVVYFLVV). Residues 125–151 (NSNSSGRHEAPGTAGTPPPNYGPRADT) are disordered.

It belongs to the MscL family. In terms of assembly, homopentamer.

The protein resides in the cell membrane. In terms of biological role, channel that opens in response to stretch forces in the membrane lipid bilayer. May participate in the regulation of osmotic pressure changes within the cell. The protein is Large-conductance mechanosensitive channel of Mycobacterium ulcerans (strain Agy99).